Reading from the N-terminus, the 154-residue chain is Anaerobic ribonucleoside-triphosphate reductase-activating protein (154 aa).

[4Fe-4S] cluster is bound by residues Cys-26, Cys-30, and Cys-33. Residues 32 to 34 and Gly-74 each bind S-adenosyl-L-methionine; that span reads GCY.

It belongs to the organic radical-activating enzymes family. In terms of assembly, forms a tetramer composed of two NrdD and two NrdG subunits. The cofactor is [4Fe-4S] cluster.

Its subcellular location is the cytoplasm. It catalyses the reaction glycyl-[protein] + reduced [flavodoxin] + S-adenosyl-L-methionine = glycin-2-yl radical-[protein] + semiquinone [flavodoxin] + 5'-deoxyadenosine + L-methionine + H(+). Activation of anaerobic ribonucleoside-triphosphate reductase under anaerobic conditions by generation of an organic free radical, using S-adenosylmethionine and reduced flavodoxin as cosubstrates to produce 5'-deoxy-adenosine. This is Anaerobic ribonucleoside-triphosphate reductase-activating protein (nrdG) from Escherichia coli O157:H7.